Reading from the N-terminus, the 447-residue chain is Argininosuccinate synthase (447 aa).

Residues 20–28 (AFSGGLDTS) and alanine 46 each bind ATP. An L-citrulline-binding site is contributed by tyrosine 102. ATP contacts are provided by glycine 132 and threonine 134. Positions 134, 138, and 139 each coordinate L-aspartate. Asparagine 138 is an L-citrulline binding site. Aspartate 139 serves as a coordination point for ATP. Residues arginine 142 and serine 195 each contribute to the L-citrulline site. Aspartate 197 contacts ATP. L-citrulline-binding residues include threonine 204, glutamate 206, and glutamate 283.

The protein belongs to the argininosuccinate synthase family. Type 2 subfamily. Homotetramer.

It is found in the cytoplasm. It catalyses the reaction L-citrulline + L-aspartate + ATP = 2-(N(omega)-L-arginino)succinate + AMP + diphosphate + H(+). It participates in amino-acid biosynthesis; L-arginine biosynthesis; L-arginine from L-ornithine and carbamoyl phosphate: step 2/3. The chain is Argininosuccinate synthase (argG) from Neisseria meningitidis serogroup A / serotype 4A (strain DSM 15465 / Z2491).